The sequence spans 131 residues: uncharacterized protein (131 aa).

Residues 14–130 (FLLIYSSLEV…RRLPASFLST (117 aa)) form the MSP domain.

This is an uncharacterized protein from Caenorhabditis elegans.